Here is a 465-residue protein sequence, read N- to C-terminus: Plasma alpha-L-fucosidase (465 aa).

Residues 1–26 (MRPQELPRLAFPLLLLLLLPPPPCPA) form the signal peptide. N-linked (GlcNAc...) asparagine glycosylation is found at asparagine 169 and asparagine 237. Serine 299 is subject to Phosphoserine. N-linked (GlcNAc...) asparagine glycosylation is present at asparagine 375.

The protein belongs to the glycosyl hydrolase 29 family. In terms of assembly, homotetramer.

It localises to the secreted. The enzyme catalyses an alpha-L-fucoside + H2O = L-fucose + an alcohol. Alpha-L-fucosidase is responsible for hydrolyzing the alpha-1,6-linked fucose joined to the reducing-end N-acetylglucosamine of the carbohydrate moieties of glycoproteins. The sequence is that of Plasma alpha-L-fucosidase (FUCA2) from Pongo abelii (Sumatran orangutan).